Consider the following 148-residue polypeptide: 3-hydroxyacyl-[acyl-carrier-protein] dehydratase FabZ (148 aa).

His50 is a catalytic residue.

This sequence belongs to the thioester dehydratase family. FabZ subfamily.

It is found in the cytoplasm. It carries out the reaction a (3R)-hydroxyacyl-[ACP] = a (2E)-enoyl-[ACP] + H2O. Involved in unsaturated fatty acids biosynthesis. Catalyzes the dehydration of short chain beta-hydroxyacyl-ACPs and long chain saturated and unsaturated beta-hydroxyacyl-ACPs. This Levilactobacillus brevis (strain ATCC 367 / BCRC 12310 / CIP 105137 / JCM 1170 / LMG 11437 / NCIMB 947 / NCTC 947) (Lactobacillus brevis) protein is 3-hydroxyacyl-[acyl-carrier-protein] dehydratase FabZ.